The sequence spans 1159 residues: Calcium-activated potassium channel subunit alpha-1 (1159 aa).

Residues 1-24 (EPNMDALIIPVTMEVPCDSRGQRM) lie on the Extracellular side of the membrane. The chain crosses the membrane as a helical span at residues 25–45 (WWAFLASSMVTFFGGLFIILL). Topologically, residues 46-116 (WRTLKYLWTV…MISAQTLTGR (71 aa)) are cytoplasmic. 3 S-palmitoyl cysteine lipidation sites follow: Cys-56, Cys-57, and Cys-59. The helical transmembrane segment at 117–137 (VLVVLVFALSIGALVIYFIDS) threads the bilayer. The Extracellular portion of the chain corresponds to 138–152 (SNPIESCQNFYKDFT). Residues 153–173 (LQIDMAFNVFFLLYFGLRFIA) form a helical membrane-spanning segment. Residues 174-177 (ANDN) are Cytoplasmic-facing. The helical transmembrane segment at 178–198 (LWFWLEVNSVVDFFTVPPVFV) threads the bilayer. Residues 199–202 (SVYL) lie on the Extracellular side of the membrane. A helical; Voltage-sensor transmembrane segment spans residues 203 to 223 (NRSWLGLRFLRALRLIQFSEI). Residues 224–238 (LQFLNILKTSNSIKL) lie on the Cytoplasmic side of the membrane. A helical membrane pass occupies residues 239–259 (VNLLSIFISTWLTAAGFIHLV). Over 260-273 (ENSGDPWENFQNSQ) the chain is Extracellular. The pore-forming intramembrane region spans 274-296 (ALTYWECVYLLMVTMSTVGYGDV). A Selectivity for potassium motif is present at residues 290-293 (TVGY). The Extracellular segment spans residues 297–305 (YAKTTPGGL). The helical transmembrane segment at 306–326 (FIVFFILGGLAMFASYVPEII) threads the bilayer. Over 327–1159 (EIIGNRKKYG…PPIREVEDEC (833 aa)) the chain is Cytoplasmic. The region spanning 345–487 (RKHIVVCGHI…WNWKEGDDAI (143 aa)) is the RCK N-terminal 1 domain. Residues Glu-377, Gln-400, and Glu-402 each contribute to the Mg(2+) site. A segment S7 region spans residues 494-514 (LGFIAQSCLAQGLSTMLANLF). Residues 551–571 (LSFPTVCELCFVKLKLLMIAI) are segment S8. Positions 615–619 (CKACH) are heme-binding motif. The disordered stretch occupies residues 639–668 (EQPSTLSPKKKQRNGGMRNSPSSSPKLMRH). A Phosphothreonine modification is found at Thr-643. 3 positions are modified to phosphoserine: Ser-645, Ser-658, and Ser-662. Residues 717 to 737 (VLSGHVVVCIFGHVSSALIGL) form a segment S9 region. Residues 719–863 (SGHVVVCIFG…MDKSSPDNSP (145 aa)) enclose the RCK N-terminal 2 domain. Thr-850 is modified (phosphothreonine). Residues Ser-858 and Ser-862 each carry the phosphoserine modification. The Calcium bowl signature appears at 883-905 (TELVNDTNVQFLDQDDDDDPDTE). Positions 892, 895, 898, and 900 each coordinate Ca(2+). A segment S10 region spans residues 912–932 (FACGTAFAVSVLDSLMSATYF). A compositionally biased stretch (low complexity) spans 1066–1091 (RASLSHSSHSSQSSSKKSSSVHSIPS). The tract at residues 1066–1124 (RASLSHSSHSSQSSSKKSSSVHSIPSTANRQNRPKSRESRDKQTEKKWFTDEPDNAYPR) is disordered. The segment covering 1100–1115 (KSRESRDKQTEKKWFT) has biased composition (basic and acidic residues). A phosphoserine mark is found at Ser-1101 and Ser-1104.

The protein belongs to the potassium channel family. Calcium-activated (TC 1.A.1.3) subfamily. KCa1.1/KCNMA1 sub-subfamily. Homotetramer; which constitutes the calcium-activated potassium channel. Interacts with beta subunits KCNMB1, KCNMB2, KCNMB3 and KCNMB4. Interacts with gamma subunits LRRC26, LRRC38, LRRC52 and LRRC55. Beta and gamma subunits are accessory, and modulate its activity. Interacts with RAB11B. In terms of processing, phosphorylated. Phosphorylation by kinases such as PKA and/or PKG. In smooth muscles, phosphorylation affects its activity. Palmitoylation by ZDHHC22 and ZDHHC23 within the intracellular linker between the S0 and S1 transmembrane domains regulates localization to the plasma membrane. Depalmitoylated by LYPLA1 and LYPLAL1, leading to retard exit from the trans-Golgi network. As to expression, expressed in all vascular and smooth muscles.

It is found in the cell membrane. The catalysed reaction is K(+)(in) = K(+)(out). With respect to regulation, ethanol and carbon monoxide-bound heme increase channel activation. Heme inhibits channel activation. Its function is as follows. Potassium channel activated by both membrane depolarization or increase in cytosolic Ca(2+) that mediates export of K(+). It is also activated by the concentration of cytosolic Mg(2+). Its activation dampens the excitatory events that elevate the cytosolic Ca(2+) concentration and/or depolarize the cell membrane. It therefore contributes to repolarization of the membrane potential. Plays a key role in controlling excitability in a number of systems, such as regulation of the contraction of smooth muscle, the tuning of hair cells in the cochlea, regulation of transmitter release, and innate immunity. In smooth muscles, its activation by high level of Ca(2+), caused by ryanodine receptors in the sarcoplasmic reticulum, regulates the membrane potential. In cochlea cells, its number and kinetic properties partly determine the characteristic frequency of each hair cell and thereby helps to establish a tonotopic map. Kinetics of KCNMA1 channels are determined by alternative splicing, phosphorylation status and its combination with modulating beta subunits. Highly sensitive to both iberiotoxin (IbTx) and charybdotoxin (CTX). This chain is Calcium-activated potassium channel subunit alpha-1 (KCNMA1), found in Canis lupus familiaris (Dog).